Consider the following 344-residue polypeptide: Aspartate carbamoyltransferase catalytic subunit (344 aa).

The segment at 1–30 is disordered; the sequence is MPESPPLPKRSPLMTSSTTRPASDYPPGGD. Arg88 and Thr89 together coordinate carbamoyl phosphate. L-aspartate is bound at residue Lys116. Carbamoyl phosphate contacts are provided by Arg138, His166, and Gln169. The L-aspartate site is built by Arg199 and Arg253. Residues Gly294 and Pro295 each contribute to the carbamoyl phosphate site.

This sequence belongs to the aspartate/ornithine carbamoyltransferase superfamily. ATCase family. In terms of assembly, heterododecamer (2C3:3R2) of six catalytic PyrB chains organized as two trimers (C3), and six regulatory PyrI chains organized as three dimers (R2).

It carries out the reaction carbamoyl phosphate + L-aspartate = N-carbamoyl-L-aspartate + phosphate + H(+). The protein operates within pyrimidine metabolism; UMP biosynthesis via de novo pathway; (S)-dihydroorotate from bicarbonate: step 2/3. In terms of biological role, catalyzes the condensation of carbamoyl phosphate and aspartate to form carbamoyl aspartate and inorganic phosphate, the committed step in the de novo pyrimidine nucleotide biosynthesis pathway. In Sphingopyxis alaskensis (strain DSM 13593 / LMG 18877 / RB2256) (Sphingomonas alaskensis), this protein is Aspartate carbamoyltransferase catalytic subunit.